The sequence spans 196 residues: MSYIPYVVEKTARGERSYDIYSRLLKDRIIMLSGEVNDAVASSIVAQMLFLEAEDPEKDIYFYINSPGGVVTAGMAIYDTMNYIRPDVATICVGQAASMGAFLLSSGAKGKRYALPHARIMIHQPLGGAQGQATDIAIQAKEILRMKEELNAILAKNCSQSIKKVEKDTDRDNFMSAEESKEYGMIDEVLLKKSKE.

Catalysis depends on Ser98, which acts as the Nucleophile. Residue His123 is part of the active site.

It belongs to the peptidase S14 family. As to quaternary structure, fourteen ClpP subunits assemble into 2 heptameric rings which stack back to back to give a disk-like structure with a central cavity, resembling the structure of eukaryotic proteasomes.

It localises to the cytoplasm. It carries out the reaction Hydrolysis of proteins to small peptides in the presence of ATP and magnesium. alpha-casein is the usual test substrate. In the absence of ATP, only oligopeptides shorter than five residues are hydrolyzed (such as succinyl-Leu-Tyr-|-NHMec, and Leu-Tyr-Leu-|-Tyr-Trp, in which cleavage of the -Tyr-|-Leu- and -Tyr-|-Trp bonds also occurs).. Its function is as follows. Cleaves peptides in various proteins in a process that requires ATP hydrolysis. Has a chymotrypsin-like activity. Plays a major role in the degradation of misfolded proteins. The sequence is that of ATP-dependent Clp protease proteolytic subunit from Sulfurimonas denitrificans (strain ATCC 33889 / DSM 1251) (Thiomicrospira denitrificans (strain ATCC 33889 / DSM 1251)).